Reading from the N-terminus, the 126-residue chain is Aspartate 1-decarboxylase (126 aa).

Ser25 functions as the Schiff-base intermediate with substrate; via pyruvic acid in the catalytic mechanism. Pyruvic acid (Ser) is present on Ser25. Residue Thr57 participates in substrate binding. Residue Tyr58 is the Proton donor of the active site. 73–75 lines the substrate pocket; sequence GGA.

It belongs to the PanD family. As to quaternary structure, heterooctamer of four alpha and four beta subunits. It depends on pyruvate as a cofactor. Is synthesized initially as an inactive proenzyme, which is activated by self-cleavage at a specific serine bond to produce a beta-subunit with a hydroxyl group at its C-terminus and an alpha-subunit with a pyruvoyl group at its N-terminus.

The protein resides in the cytoplasm. The enzyme catalyses L-aspartate + H(+) = beta-alanine + CO2. The protein operates within cofactor biosynthesis; (R)-pantothenate biosynthesis; beta-alanine from L-aspartate: step 1/1. Catalyzes the pyruvoyl-dependent decarboxylation of aspartate to produce beta-alanine. The chain is Aspartate 1-decarboxylase from Acinetobacter baumannii (strain ACICU).